The primary structure comprises 401 residues: Arylacetamide deacetylase-like 2 (401 aa).

The signal sequence occupies residues 1–18 (MGLKALCLGLLCVLFVSH). Residues 111-113 (HGG) carry the Involved in the stabilization of the negatively charged intermediate by the formation of the oxyanion hole motif. An intrachain disulfide couples Cys-116 to Cys-338. Active-site residues include Ser-189, Asp-341, and His-371.

The protein belongs to the 'GDXG' lipolytic enzyme family.

The protein resides in the secreted. This chain is Arylacetamide deacetylase-like 2 (AADACL2), found in Homo sapiens (Human).